Reading from the N-terminus, the 96-residue chain is Small ribosomal subunit protein bS6 (96 aa).

The protein belongs to the bacterial ribosomal protein bS6 family.

Its function is as follows. Binds together with bS18 to 16S ribosomal RNA. The sequence is that of Small ribosomal subunit protein bS6 from Streptococcus equi subsp. zooepidemicus (strain MGCS10565).